Reading from the N-terminus, the 387-residue chain is Putative protein FAM157C (387 aa).

3 disordered regions span residues 1-21 (MGPLFTTIPGAHSGPMRPLPK), 182-226 (TARP…GAEP), and 329-353 (RARDPAPTNFPLKCQKQRGASTSSG).

It belongs to the FAM157 family.

The chain is Putative protein FAM157C (FAM157C) from Homo sapiens (Human).